We begin with the raw amino-acid sequence, 163 residues long: Small ribosomal subunit protein uS5 (163 aa).

The region spanning 8–71 (LVEKIVYLNR…ERAKKDMVQI (64 aa)) is the S5 DRBM domain.

The protein belongs to the universal ribosomal protein uS5 family. As to quaternary structure, part of the 30S ribosomal subunit. Contacts proteins S4 and S8.

Its function is as follows. With S4 and S12 plays an important role in translational accuracy. Located at the back of the 30S subunit body where it stabilizes the conformation of the head with respect to the body. This chain is Small ribosomal subunit protein uS5, found in Nitratidesulfovibrio vulgaris (strain DSM 19637 / Miyazaki F) (Desulfovibrio vulgaris).